A 1619-amino-acid polypeptide reads, in one-letter code: MITNSFTNNFQFIKDTGILKDFPLSVKRILVFQTVNFLLEPPNGNTQFIVTSKEHLQWIMEITEQGFLLPIEDSQIILQCIELYKKWLFDPKHKPTPLIDDDDEYFHKKIIEHLTLIFQPRSYPHYISMSNNNSNNNSNNSNININNNNNNNNNNNNNNNNNNNNNNNNNSNNTNSGSNNKESSNNNSPILSSSNSGSGSSLSLNKDKEGGGSNSGSFLGVNQQSSPPPQQISATTTAATSPTTPTTPIKDTLQQQFLQQEVGGFNEVVQQQQQQQQQQQQQQQQQQQQQQQQQSPSITTGTVKGSKYRESVMPGSSMMVQSSTTALYSSNNYSGNVQLPNISVKELIDSHSVLCQKVLQIYLEMSRGTYSRSFSTDTLEHWNRLMLSITDCILGIHSNSDEMLARNLCPLLLKTLFEVWLQSKTLNPTLWNSLTKYAQGWFHHMPTVNQWNLTCLALTTPLVQSIYTNDHQSKSTITIRLDETSIEFEKEYLYYAWNRILNLIGNPNQIKSPAIFSEAITGIFHLVSMFLSVTNDGNAILHIFGSWIFEAVKTIKPGFDEGISLGSEILLHIFLSCSRKIEFLPIYLSCFYTCISEALWCDGKILRDTIIHSQNIFSSGLPGSRILIPSYIRALNHILTAQGTNDPELRRCAIKILGSILCLPNRYETVKFHNFFPGRTIDPYPPLPNDIIDGKHNELTLPPNEINTYDDLKPHLAYLILSALNTEMSSSNLLTLIWYIMFYQLEYQHQHVKPYPDGKLITSSFIHQSINTILKKCSSFTNQWSHDVILSSFQLLSDLASQHQRIPNFLENASTVVRKLCKFITFKCKETNMSPETEDLISLGCSTIADWVVVSPWIFEGNYLTDTSTFYMVFNALSVAMGAKSPNDIISSNASISSSVSNTGISSIGGGGSSGSGNSSQPSSTGSGSGGVDSGSKSNSSSSSSSQPSSTGGSGNNSNSANGGSFKRPKPYINNNISPKVKEVAQCALKAIMSKISYFPNPYNATPTNTSSKVTESDIITQIKAKAEKHLGIKNFPSEQSLRFYAIGDSIIITVIDQPFTSTSSSPSDSYVTLIIRDMSGKSVINSQLAFLPFKQREISEIQQPITNEKESQIDDGDDSVPTNTTATTIDNTISNNNTTTTSNNSIKSTSNNKVPIKKRSQYNCNEEPFISSYIENVEDFGDLSSYIEKHIDENFTKLIDNQMEVEKQKLFANKYSLTPSITTHPPVLKTSFNGDCKLQQARILLTHLGFLNQENRNKLTPLENSVQFFQSLNMLDSVSERVQIKIPIIYVKKGDSTEDDIYNNVTSNTTQDYQDFIASLGWLVPISTHTGFLGDLDKKNLTHGQFTPYYATHSREMVFFVSTMMPNSDIANNSSQEHKKKLINKTNVSVIWFNGSIEVYEKTLLETFPHAIQIVITPLENDLFRLKTLRKATHSNRMKTGPVNDEIIISKHILANVIRLSVVNSNQSLLNLSSGDGKTQHIYTNRKKLISDITESFKHDMTIQKFYEFHFEPLDQSQLYQNTENLPMANNFKFVKTSSVNLFRKDRTQSALIGTFTLPPPPISPTISPQPSPHLSSSGGSWASSKGGSTQPTTPSGRTSNFLSRRPNLSQSEDQSHK.

4 disordered regions span residues 128 to 249 (SMSN…TTPI), 289 to 316 (QQQQ…MPGS), 907 to 974 (SIGG…PYIN), and 1134 to 1153 (ISNN…TSNN). Low complexity-rich tracts occupy residues 130-204 (SNNN…SLSL) and 231-249 (QISA…TTPI). Positions 265 to 295 (FNEVVQQQQQQQQQQQQQQQQQQQQQQQQQS) form a coiled coil. 2 stretches are compositionally biased toward low complexity: residues 916 to 926 (SGNSSQPSSTG) and 934 to 965 (SGSK…NGGS). Residues 1273-1494 (LNMLDSVSER…TNRKKLISDI (222 aa)) form the Rap-GAP domain. Positions 1554–1619 (IGTFTLPPPP…LSQSEDQSHK (66 aa)) are disordered. The span at 1559–1573 (LPPPPISPTISPQPS) shows a compositional bias: pro residues. Residues 1574–1590 (PHLSSSGGSWASSKGGS) show a composition bias toward low complexity. Positions 1591–1619 (TQPTTPSGRTSNFLSRRPNLSQSEDQSHK) are enriched in polar residues.

This Dictyostelium discoideum (Social amoeba) protein is Rap-GAP domain-containing protein DDB_G0281809.